The chain runs to 178 residues: uncharacterized protein (178 aa).

This is an uncharacterized protein from Schizosaccharomyces pombe (strain 972 / ATCC 24843) (Fission yeast).